The primary structure comprises 860 residues: Leucine--tRNA ligase (860 aa).

The short motif at 42 to 52 (PYPSGRLHMGH) is the 'HIGH' region element. The 'KMSKS' region signature appears at 619-623 (KMSKS). Lys622 is a binding site for ATP.

It belongs to the class-I aminoacyl-tRNA synthetase family.

The protein localises to the cytoplasm. It carries out the reaction tRNA(Leu) + L-leucine + ATP = L-leucyl-tRNA(Leu) + AMP + diphosphate. The chain is Leucine--tRNA ligase from Salmonella typhimurium (strain LT2 / SGSC1412 / ATCC 700720).